The sequence spans 100 residues: Aspartyl/glutamyl-tRNA(Asn/Gln) amidotransferase subunit C (100 aa).

Belongs to the GatC family. Heterotrimer of A, B and C subunits.

It carries out the reaction L-glutamyl-tRNA(Gln) + L-glutamine + ATP + H2O = L-glutaminyl-tRNA(Gln) + L-glutamate + ADP + phosphate + H(+). It catalyses the reaction L-aspartyl-tRNA(Asn) + L-glutamine + ATP + H2O = L-asparaginyl-tRNA(Asn) + L-glutamate + ADP + phosphate + 2 H(+). Allows the formation of correctly charged Asn-tRNA(Asn) or Gln-tRNA(Gln) through the transamidation of misacylated Asp-tRNA(Asn) or Glu-tRNA(Gln) in organisms which lack either or both of asparaginyl-tRNA or glutaminyl-tRNA synthetases. The reaction takes place in the presence of glutamine and ATP through an activated phospho-Asp-tRNA(Asn) or phospho-Glu-tRNA(Gln). The protein is Aspartyl/glutamyl-tRNA(Asn/Gln) amidotransferase subunit C of Rickettsia peacockii (strain Rustic).